Consider the following 421-residue polypeptide: Serine--tRNA ligase (421 aa).

229–231 is an L-serine binding site; sequence TAE. ATP is bound at residue 260–262; the sequence is RSE. Residue Glu-283 coordinates L-serine. 347–350 is a binding site for ATP; the sequence is EISS. Ser-382 contacts L-serine.

This sequence belongs to the class-II aminoacyl-tRNA synthetase family. Type-1 seryl-tRNA synthetase subfamily. In terms of assembly, homodimer. The tRNA molecule binds across the dimer.

It is found in the cytoplasm. The enzyme catalyses tRNA(Ser) + L-serine + ATP = L-seryl-tRNA(Ser) + AMP + diphosphate + H(+). It catalyses the reaction tRNA(Sec) + L-serine + ATP = L-seryl-tRNA(Sec) + AMP + diphosphate + H(+). It participates in aminoacyl-tRNA biosynthesis; selenocysteinyl-tRNA(Sec) biosynthesis; L-seryl-tRNA(Sec) from L-serine and tRNA(Sec): step 1/1. In terms of biological role, catalyzes the attachment of serine to tRNA(Ser). Is also able to aminoacylate tRNA(Sec) with serine, to form the misacylated tRNA L-seryl-tRNA(Sec), which will be further converted into selenocysteinyl-tRNA(Sec). This chain is Serine--tRNA ligase, found in Symbiobacterium thermophilum (strain DSM 24528 / JCM 14929 / IAM 14863 / T).